A 102-amino-acid polypeptide reads, in one-letter code: Small ribosomal subunit protein uS10 (102 aa).

The protein belongs to the universal ribosomal protein uS10 family. As to quaternary structure, part of the 30S ribosomal subunit.

Functionally, involved in the binding of tRNA to the ribosomes. The sequence is that of Small ribosomal subunit protein uS10 from Symbiobacterium thermophilum (strain DSM 24528 / JCM 14929 / IAM 14863 / T).